Reading from the N-terminus, the 140-residue chain is Large ribosomal subunit protein uL11 (140 aa).

The protein belongs to the universal ribosomal protein uL11 family. As to quaternary structure, part of the ribosomal stalk of the 50S ribosomal subunit. Interacts with L10 and the large rRNA to form the base of the stalk. L10 forms an elongated spine to which L12 dimers bind in a sequential fashion forming a multimeric L10(L12)X complex. In terms of processing, one or more lysine residues are methylated.

In terms of biological role, forms part of the ribosomal stalk which helps the ribosome interact with GTP-bound translation factors. This chain is Large ribosomal subunit protein uL11, found in Desulfatibacillum aliphaticivorans.